A 609-amino-acid polypeptide reads, in one-letter code: UvrABC system protein C (609 aa).

In terms of domain architecture, GIY-YIG spans Ala19–Val97. Residues Glu208–Phe243 form the UVR domain.

This sequence belongs to the UvrC family. As to quaternary structure, interacts with UvrB in an incision complex.

The protein resides in the cytoplasm. The UvrABC repair system catalyzes the recognition and processing of DNA lesions. UvrC both incises the 5' and 3' sides of the lesion. The N-terminal half is responsible for the 3' incision and the C-terminal half is responsible for the 5' incision. The chain is UvrABC system protein C from Leptospira interrogans serogroup Icterohaemorrhagiae serovar copenhageni (strain Fiocruz L1-130).